Consider the following 218-residue polypeptide: Large ribosomal subunit protein uL3 (218 aa).

Belongs to the universal ribosomal protein uL3 family. In terms of assembly, part of the 50S ribosomal subunit. Forms a cluster with proteins L14 and L19.

Its function is as follows. One of the primary rRNA binding proteins, it binds directly near the 3'-end of the 23S rRNA, where it nucleates assembly of the 50S subunit. This is Large ribosomal subunit protein uL3 from Syntrophus aciditrophicus (strain SB).